The primary structure comprises 211 residues: Small ribosomal subunit protein bS6c alpha (211 aa).

Low complexity predominate over residues 1-19 (MATFSLTSTLPSSSPTTSL). Disordered stretches follow at residues 1 to 25 (MATF…IPKP) and 80 to 100 (DEDP…PEPQ). The N-terminal 65 residues, 1–65 (MATFSLTSTL…YGPYVKAIAL (65 aa)), are a transit peptide targeting the chloroplast.

The protein belongs to the bacterial ribosomal protein bS6 family. In terms of assembly, component of the chloroplast small ribosomal subunit (SSU). Mature 70S chloroplast ribosomes of higher plants consist of a small (30S) and a large (50S) subunit. The 30S small subunit contains 1 molecule of ribosomal RNA (16S rRNA) and 24 different proteins. The 50S large subunit contains 3 rRNA molecules (23S, 5S and 4.5S rRNA) and 33 different proteins.

It localises to the plastid. The protein localises to the chloroplast. Functionally, component of the chloroplast ribosome (chloro-ribosome), a dedicated translation machinery responsible for the synthesis of chloroplast genome-encoded proteins, including proteins of the transcription and translation machinery and components of the photosynthetic apparatus. In Spinacia oleracea (Spinach), this protein is Small ribosomal subunit protein bS6c alpha (RPS6).